The chain runs to 288 residues: Elongation factor Ts (288 aa).

The tract at residues 82–85 (TDFV) is involved in Mg(2+) ion dislocation from EF-Tu.

This sequence belongs to the EF-Ts family.

Its subcellular location is the cytoplasm. Functionally, associates with the EF-Tu.GDP complex and induces the exchange of GDP to GTP. It remains bound to the aminoacyl-tRNA.EF-Tu.GTP complex up to the GTP hydrolysis stage on the ribosome. The polypeptide is Elongation factor Ts (Chlorobaculum tepidum (strain ATCC 49652 / DSM 12025 / NBRC 103806 / TLS) (Chlorobium tepidum)).